Reading from the N-terminus, the 106-residue chain is MFEIIQAVFSAGVALALLTFAGITLGGSVVACIISTPLFVIFSPVLVPATIATTLLASGFTASGSFGATAFTILSWLYKKRTGRDLPKIPGLTPPAPASNPAGSGV.

3 consecutive transmembrane segments (helical) span residues 14–34, 37–57, and 58–78; these read ALAL…ACII, PLFV…TLLA, and SGFT…SWLY. Residues 84 to 106 are disordered; the sequence is RDLPKIPGLTPPAPASNPAGSGV.

It belongs to the oleosin family. Proteolytically cleaved following anther tapetal breakdown. Present in pollen (at protein level). Inflorescence-specific expression, especially in flowers florets.

It is found in the secreted. It localises to the extracellular space. The protein localises to the extracellular matrix. Its subcellular location is the pollen coat. The protein resides in the lipid droplet. It is found in the membrane. In terms of biological role, lipid-binding oleosin involved in anther tapetum development, especially for the physiology of tapetosomes. Also implicated in the formation of pollen coat. This chain is Tapetal oleosin GRP-19, found in Arabidopsis thaliana (Mouse-ear cress).